The sequence spans 551 residues: Membrane protein insertase YidC (551 aa).

Residues 3-23 (ANHIRILLLVTIAIMFISLMG) traverse the membrane as a helical segment. The tract at residues 33–55 (NTKQQTSATQNNSHYDNADSSTN) is disordered. 3 helical membrane passes run 361–381 (LVGN…LIFY), 431–451 (LSGC…YWVL), and 504–524 (VMMF…SGLV).

Belongs to the OXA1/ALB3/YidC family. Type 1 subfamily. As to quaternary structure, interacts with the Sec translocase complex via SecD. Specifically interacts with transmembrane segments of nascent integral membrane proteins during membrane integration.

Its subcellular location is the cell inner membrane. Functionally, required for the insertion and/or proper folding and/or complex formation of integral membrane proteins into the membrane. Involved in integration of membrane proteins that insert both dependently and independently of the Sec translocase complex, as well as at least some lipoproteins. Aids folding of multispanning membrane proteins. The protein is Membrane protein insertase YidC of Francisella tularensis subsp. holarctica (strain OSU18).